Consider the following 551-residue polypeptide: Cytochrome bc1 complex cytochrome b subunit (551 aa).

Residues 44 to 64 (FLLGEIALYSFIVLLLTGVYL) form a helical membrane-spanning segment. The heme site is built by H113 and H127. Transmembrane regions (helical) follow at residues 117 to 137 (ALMF…TGAF), 145 to 165 (WVIG…GYSM), and 188 to 208 (VIGT…TILI). Heme is bound by residues H215 and H230. Helical transmembrane passes span 216-236 (ILLI…LVWF), 265-285 (SGAF…FLQI), 334-354 (PVWV…YPFL), 380-400 (IGAM…NDII), and 417-437 (IGMV…CIGL). The tract at residues 532–551 (ALREHQDSIASSPNGERGKH) is disordered.

It belongs to the cytochrome b family. The cytochrome bc1 complex is composed of a cytochrome b (QcrB), the Rieske iron-sulfur protein (QcrA) and a diheme cytochrome c (QcrC) subunit. The cofactor is heme.

It is found in the cell membrane. It carries out the reaction a quinol + 2 Fe(III)-[cytochrome c](out) = a quinone + 2 Fe(II)-[cytochrome c](out) + 2 H(+)(out). Cytochrome b subunit of the cytochrome bc1 complex, an essential component of the respiratory electron transport chain required for ATP synthesis. The bc1 complex catalyzes the oxidation of ubiquinol and the reduction of cytochrome c in the respiratory chain. The bc1 complex operates through a Q-cycle mechanism that couples electron transfer to generation of the proton gradient that drives ATP synthesis. The cytochrome b subunit contains two ubiquinol reactive sites: the oxidation (QP) site and the reduction (QN) site. The sequence is that of Cytochrome bc1 complex cytochrome b subunit (qcrB) from Mycobacterium leprae (strain TN).